Here is a 172-residue protein sequence, read N- to C-terminus: 3-hydroxydecanoyl-[acyl-carrier-protein] dehydratase (172 aa).

Residue H71 is part of the active site.

It belongs to the thioester dehydratase family. FabA subfamily. Homodimer.

The protein resides in the cytoplasm. It catalyses the reaction a (3R)-hydroxyacyl-[ACP] = a (2E)-enoyl-[ACP] + H2O. It carries out the reaction (3R)-hydroxydecanoyl-[ACP] = (2E)-decenoyl-[ACP] + H2O. The catalysed reaction is (2E)-decenoyl-[ACP] = (3Z)-decenoyl-[ACP]. The protein operates within lipid metabolism; fatty acid biosynthesis. Its function is as follows. Necessary for the introduction of cis unsaturation into fatty acids. Catalyzes the dehydration of (3R)-3-hydroxydecanoyl-ACP to E-(2)-decenoyl-ACP and then its isomerization to Z-(3)-decenoyl-ACP. Can catalyze the dehydratase reaction for beta-hydroxyacyl-ACPs with saturated chain lengths up to 16:0, being most active on intermediate chain length. The chain is 3-hydroxydecanoyl-[acyl-carrier-protein] dehydratase from Escherichia coli (strain 55989 / EAEC).